The chain runs to 133 residues: Mediator of RNA polymerase II transcription subunit 10 (133 aa).

The protein belongs to the Mediator complex subunit 10 family. Component of the Mediator complex. Interacts with MED4 and MED21.

The protein localises to the nucleus. In terms of biological role, component of the Mediator complex, a coactivator involved in the regulated transcription of nearly all RNA polymerase II-dependent genes. Mediator functions as a bridge to convey information from gene-specific regulatory proteins to the basal RNA polymerase II transcription machinery. Mediator is recruited to promoters by direct interactions with regulatory proteins and serves as a scaffold for the assembly of a functional preinitiation complex with RNA polymerase II and the general transcription factors. Required for activated transcription of the MtnA, MtnB and MtnD genes. The sequence is that of Mediator of RNA polymerase II transcription subunit 10 (MED10) from Drosophila melanogaster (Fruit fly).